The following is a 331-amino-acid chain: Phosphoenolpyruvate transferase (331 aa).

Aspartate 63 is a binding site for 7,8-didemethyl-8-hydroxy-5-deazariboflavin.

Belongs to the CofD family. Homodimer. It depends on Mg(2+) as a cofactor.

It catalyses the reaction enolpyruvoyl-2-diphospho-5'-guanosine + 7,8-didemethyl-8-hydroxy-5-deazariboflavin = dehydro coenzyme F420-0 + GMP + H(+). It participates in cofactor biosynthesis; coenzyme F420 biosynthesis. Its function is as follows. Catalyzes the transfer of the phosphoenolpyruvate moiety from enoylpyruvoyl-2-diphospho-5'-guanosine (EPPG) to 7,8-didemethyl-8-hydroxy-5-deazariboflavin (FO) with the formation of dehydro coenzyme F420-0 and GMP. This Mycobacterium sp. (strain KMS) protein is Phosphoenolpyruvate transferase.